The following is a 317-amino-acid chain: Ribosomal RNA small subunit methyltransferase H (317 aa).

S-adenosyl-L-methionine is bound by residues 39–41 (GGH), Asp59, Phe83, Asp104, and Gln111.

The protein belongs to the methyltransferase superfamily. RsmH family.

The protein resides in the cytoplasm. The catalysed reaction is cytidine(1402) in 16S rRNA + S-adenosyl-L-methionine = N(4)-methylcytidine(1402) in 16S rRNA + S-adenosyl-L-homocysteine + H(+). Functionally, specifically methylates the N4 position of cytidine in position 1402 (C1402) of 16S rRNA. The chain is Ribosomal RNA small subunit methyltransferase H from Paraburkholderia xenovorans (strain LB400).